The following is a 450-amino-acid chain: Trigger factor (450 aa).

The 87-residue stretch at 163–249 folds into the PPIase FKBP-type domain; that stretch reads EDFVLIDYQG…LKEIQEQILP (87 aa). A compositionally biased stretch (acidic residues) spans 431–443; the sequence is PEVETEVSESAAD. The segment at 431 to 450 is disordered; that stretch reads PEVETEVSESAADVEDKTDQ.

It belongs to the FKBP-type PPIase family. Tig subfamily.

The protein localises to the cytoplasm. It carries out the reaction [protein]-peptidylproline (omega=180) = [protein]-peptidylproline (omega=0). Functionally, involved in protein export. Acts as a chaperone by maintaining the newly synthesized protein in an open conformation. Functions as a peptidyl-prolyl cis-trans isomerase. The chain is Trigger factor from Desulforapulum autotrophicum (strain ATCC 43914 / DSM 3382 / VKM B-1955 / HRM2) (Desulfobacterium autotrophicum).